We begin with the raw amino-acid sequence, 150 residues long: Transthyretin (150 aa).

The first 20 residues, 1-20 (MASYRLLLLCLAGLVFVSEA), serve as a signal peptide directing secretion. Cys30 bears the Sulfocysteine mark. Lys35 serves as a coordination point for L-thyroxine. Glu62 carries the 4-carboxyglutamate modification. Glu74 contributes to the L-thyroxine binding site. A glycan (N-linked (GlcNAc...) asparagine) is linked at Asn118. An L-thyroxine-binding site is contributed by Ser137.

This sequence belongs to the transthyretin family. Homotetramer. Dimer of dimers. In the homotetramer, subunits assemble around a central channel that can accommodate two ligand molecules. Interacts with RBP4. Post-translationally, sulfonation of the reactive cysteine Cys-30 enhances the stability of the native conformation of TTR, avoiding misassembly of the protein leading to amyloid formation. As to expression, detected in plasma and cerebrospinal fluid (at protein level). Highly expressed in the choroid plexus. Detected in liver.

It is found in the secreted. Its function is as follows. Thyroid hormone-binding protein. Probably transports thyroxine from the bloodstream to the brain. This chain is Transthyretin (TTR), found in Sus scrofa (Pig).